We begin with the raw amino-acid sequence, 163 residues long: Nucleotide-binding protein CYB_0891 (163 aa).

This sequence belongs to the YajQ family.

In terms of biological role, nucleotide-binding protein. The polypeptide is Nucleotide-binding protein CYB_0891 (Synechococcus sp. (strain JA-2-3B'a(2-13)) (Cyanobacteria bacterium Yellowstone B-Prime)).